The following is a 1238-amino-acid chain: DNA-directed RNA polymerase subunit beta (1238 aa).

A disordered region spans residues 1186-1238; the sequence is IEGREDTPPEEVYEEGYEEGFEEESEELPEDIDFEPDSFDIENDDLDLEDFDI. Acidic residues predominate over residues 1193 to 1238; sequence PPEEVYEEGYEEGFEEESEELPEDIDFEPDSFDIENDDLDLEDFDI.

The protein belongs to the RNA polymerase beta chain family. The RNAP catalytic core consists of 2 alpha, 1 beta, 1 beta' and 1 omega subunit. When a sigma factor is associated with the core the holoenzyme is formed, which can initiate transcription.

The catalysed reaction is RNA(n) + a ribonucleoside 5'-triphosphate = RNA(n+1) + diphosphate. Functionally, DNA-dependent RNA polymerase catalyzes the transcription of DNA into RNA using the four ribonucleoside triphosphates as substrates. The protein is DNA-directed RNA polymerase subunit beta of Thermoanaerobacter sp. (strain X514).